We begin with the raw amino-acid sequence, 311 residues long: MDGNYTLVTEFILLGFPTRPELQIVLFLVFLTLYGIILTGNIGLMMLIRTDPHLQTPMYFFLSNLSFADLCFSSAIVPKMLVNFLSENKSISLYGCALQFYFSCAFADTESFILAAMAYDRYVAICNPLLYTVVMSRGICVWLIVLSYIGGNMSSLVHTSFAFILKYCDKNVINHFFCDLPPLLKLSCTDTSVNEWLLSTYGSSVEIFCFIVIVISYYFILRSVLRIRSSSGRKKTFSTCASHLTSVAIYQGTLLFIYSRPTYLYTPNTDKIISVFYTIIIPVLNPLIYSLRNKDVKDAAKRAVRLKVDSS.

Over 1-24 (MDGNYTLVTEFILLGFPTRPELQI) the chain is Extracellular. Residue Asn4 is glycosylated (N-linked (GlcNAc...) asparagine). A helical membrane pass occupies residues 25–48 (VLFLVFLTLYGIILTGNIGLMMLI). The Cytoplasmic portion of the chain corresponds to 49–56 (RTDPHLQT). A helical membrane pass occupies residues 57 to 78 (PMYFFLSNLSFADLCFSSAIVP). At 79–99 (KMLVNFLSENKSISLYGCALQ) the chain is on the extracellular side. A helical transmembrane segment spans residues 100–119 (FYFSCAFADTESFILAAMAY). The Cytoplasmic portion of the chain corresponds to 120 to 138 (DRYVAICNPLLYTVVMSRG). A helical transmembrane segment spans residues 139–157 (ICVWLIVLSYIGGNMSSLV). Over 158 to 195 (HTSFAFILKYCDKNVINHFFCDLPPLLKLSCTDTSVNE) the chain is Extracellular. Residues 196–218 (WLLSTYGSSVEIFCFIVIVISYY) form a helical membrane-spanning segment. Topologically, residues 219–235 (FILRSVLRIRSSSGRKK) are cytoplasmic. Residues 236 to 259 (TFSTCASHLTSVAIYQGTLLFIYS) traverse the membrane as a helical segment. Topologically, residues 260-271 (RPTYLYTPNTDK) are extracellular. A helical transmembrane segment spans residues 272–291 (IISVFYTIIIPVLNPLIYSL). The Cytoplasmic segment spans residues 292–311 (RNKDVKDAAKRAVRLKVDSS).

Belongs to the G-protein coupled receptor 1 family.

It localises to the cell membrane. Its function is as follows. Putative odorant or sperm cell receptor. This Canis lupus familiaris (Dog) protein is Olfactory receptor-like protein OLF1.